The sequence spans 156 residues: N-glycosidase Npun_R5314 (156 aa).

It belongs to the YbiA family.

The enzyme catalyses 2,5-diamino-6-hydroxy-4-(5-phosphoribosylamino)-pyrimidine + H2O = 2,5,6-triamino-4-hydroxypyrimidine + D-ribose 5-phosphate. It carries out the reaction 5-amino-6-(5-phospho-D-ribosylamino)uracil + H2O = 5,6-diaminouracil + D-ribose 5-phosphate. Functionally, catalyzes the hydrolysis of the N-glycosidic bond in the first two intermediates of riboflavin biosynthesis, which are highly reactive metabolites, yielding relatively innocuous products. Thus, can divert a surplus of harmful intermediates into relatively harmless products and pre-empt the damage these intermediates would otherwise do. May act on other substrates in vivo. Has no activity against GTP, nucleoside monophosphates or ADP-ribose. This chain is N-glycosidase Npun_R5314, found in Nostoc punctiforme (strain ATCC 29133 / PCC 73102).